The sequence spans 599 residues: MEKNRNYFIAIALSVVIVLAWQFLYMNPRIEQQRRAEEARQAQQQTTQQQPAPGAAPGATVEGAPPASSTQAAATATREEAIARTQRVAIDTNAIAGSINLTGARFDDIRLKGYHETVDDSSPIITLFSPADTKDGYFTELGYVAAQEVGGVPGPTTVWTLASGDKLTETTPVTLTYTNSKGVVFSRTVSIDEHYMLSIADKVENPGQAAISFATYGRVTRNNKPVIPPVFVIHEGFLGVSGKDGSLTEKKYKDVEEEPVTVAKATGGWLGITDKYWAAAIVPPQTTPFETRYSHITGNQPSYQADFKSDSMTVEAGQSIELKSLVFAGAKEVPLVDRYETEYSVPKFDLLIDWGWFYFITKPMFKMMDFFFRYFGNFGVAILLTTIVVKALFFPLASKQYASMANMKRMQPKMEELKAKHGDDRMAMQQAMMQLYKEEKINPVAGCWPMLLQIPVFFALYKVIYVTIEMRHAPFFGWIHDLSAPDPTSLFNLFGLLPYDVPHFLMIGVWPLVMGITMFLQMRMNPTPPDPTQAMIFTWMPLIFTFMLASFPAGLVIYWAWNNTLSISQQALIMKRHGAKIELFDNIKGLFKRKPVQSK.

Residues N6 to M26 traverse the membrane as a helical segment. The tract at residues R35–R78 is disordered. Positions Q41–A76 are enriched in low complexity. The next 4 membrane-spanning stretches (helical) occupy residues F378–S398, W448–I468, V501–Q521, and I536–V556.

It belongs to the OXA1/ALB3/YidC family. Type 1 subfamily. Interacts with the Sec translocase complex via SecD. Specifically interacts with transmembrane segments of nascent integral membrane proteins during membrane integration.

It is found in the cell inner membrane. Its function is as follows. Required for the insertion and/or proper folding and/or complex formation of integral membrane proteins into the membrane. Involved in integration of membrane proteins that insert both dependently and independently of the Sec translocase complex, as well as at least some lipoproteins. Aids folding of multispanning membrane proteins. In Agrobacterium fabrum (strain C58 / ATCC 33970) (Agrobacterium tumefaciens (strain C58)), this protein is Membrane protein insertase YidC.